Here is a 43-residue protein sequence, read N- to C-terminus: Protein PsbN (43 aa).

The helical transmembrane segment at 5-27 threads the bilayer; it reads TVLSIFISSLLLGITGYSIYTAF.

It belongs to the PsbN family.

The protein localises to the plastid. It is found in the chloroplast thylakoid membrane. May play a role in photosystem I and II biogenesis. This is Protein PsbN from Porphyra purpurea (Red seaweed).